We begin with the raw amino-acid sequence, 773 residues long: Subtilisin-like protease SBT3.4 (773 aa).

A signal peptide spans 1–23 (MRNFRSSVLVVLSLIIVLNVARA). The propeptide at 24 to 108 (SAKSKVHIVY…VIPDSYYELA (85 aa)) is activation peptide. Residues 29 to 108 (VHIVYLGEKQ…VIPDSYYELA (80 aa)) form the Inhibitor I9 domain. The region spanning 112-620 (IWDYLGPSAD…GGLVNPEKAA (509 aa)) is the Peptidase S8 domain. Catalysis depends on D142, which acts as the Charge relay system. An N-linked (GlcNAc...) asparagine glycan is attached at N200. Catalysis depends on H216, which acts as the Charge relay system. N-linked (GlcNAc...) asparagine glycans are attached at residues N231, N408, and N536. Residues 382-474 (SLVYPEDPGN…IDNELGTDIL (93 aa)) enclose the PA domain. S551 acts as the Charge relay system in catalysis. N643 is a glycosylation site (N-linked (GlcNAc...) asparagine).

Belongs to the peptidase S8 family.

Its subcellular location is the secreted. This is Subtilisin-like protease SBT3.4 from Arabidopsis thaliana (Mouse-ear cress).